A 453-amino-acid chain; its full sequence is Allantoinase (453 aa).

6 residues coordinate Zn(2+): histidine 59, histidine 61, lysine 146, histidine 186, histidine 242, and aspartate 315. Lysine 146 is modified (N6-carboxylysine).

Belongs to the metallo-dependent hydrolases superfamily. Allantoinase family. In terms of assembly, homotetramer. It depends on Zn(2+) as a cofactor. Carboxylation allows a single lysine to coordinate two zinc ions.

It catalyses the reaction (S)-allantoin + H2O = allantoate + H(+). Its pathway is nitrogen metabolism; (S)-allantoin degradation; allantoate from (S)-allantoin: step 1/1. Its function is as follows. Catalyzes the conversion of allantoin (5-ureidohydantoin) to allantoic acid by hydrolytic cleavage of the five-member hydantoin ring. This Escherichia coli O139:H28 (strain E24377A / ETEC) protein is Allantoinase.